A 123-amino-acid chain; its full sequence is Small ribosomal subunit protein uS12 (123 aa).

The interval 1–45 is disordered; that stretch reads MPTINQLIRKKRQSGATRKKSPALQKSPQKRGVCLQVKTKTPKKP. The segment covering 8-21 has biased composition (basic residues); that stretch reads IRKKRQSGATRKKS.

The protein belongs to the universal ribosomal protein uS12 family. In terms of assembly, part of the 30S ribosomal subunit. Contacts proteins S8 and S17. May interact with IF1 in the 30S initiation complex.

In terms of biological role, with S4 and S5 plays an important role in translational accuracy. Interacts with and stabilizes bases of the 16S rRNA that are involved in tRNA selection in the A site and with the mRNA backbone. Located at the interface of the 30S and 50S subunits, it traverses the body of the 30S subunit contacting proteins on the other side and probably holding the rRNA structure together. The combined cluster of proteins S8, S12 and S17 appears to hold together the shoulder and platform of the 30S subunit. The chain is Small ribosomal subunit protein uS12 from Chlamydia muridarum (strain MoPn / Nigg).